A 365-amino-acid chain; its full sequence is Phosphate acyltransferase (365 aa).

It belongs to the PlsX family. Homodimer. Probably interacts with PlsY.

Its subcellular location is the cytoplasm. The catalysed reaction is a fatty acyl-[ACP] + phosphate = an acyl phosphate + holo-[ACP]. It functions in the pathway lipid metabolism; phospholipid metabolism. Catalyzes the reversible formation of acyl-phosphate (acyl-PO(4)) from acyl-[acyl-carrier-protein] (acyl-ACP). This enzyme utilizes acyl-ACP as fatty acyl donor, but not acyl-CoA. The polypeptide is Phosphate acyltransferase (Klebsiella pneumoniae subsp. pneumoniae (strain ATCC 700721 / MGH 78578)).